A 369-amino-acid chain; its full sequence is MELSEIKRNIDKYNQDLTQIRGSLDLENKETNIQEYEEMMAEPNFWDNQTKAQDIIDKNNALKAIVNGYKTLQAEVDDMDATWDLLQEEFDEEMKEDLEQEVINFKAKVDEYELQLLLDGPHDANNAILELHPGAGGTESQDWANMLFRMYQRYCEKKGFKVETVDYLPGDEAGIKSVTLLIKGHNAYGYLKAEKGVHRLVRISPFDSSGRRHTSFASCDVIPDFNNDEIEIEINPDDITVDTFRASGAGGQHINKTESAIRITHHPSGIVVNNQNERSQIKNREAAMKMLKSKLYQLKLEEQAREMAEIRGEQKEIGWGSQIRSYVFHPYSMVKDHRTNEETGKVDAVMDGDIGPFIESYLRQTMSHD.

Gln252 carries the N5-methylglutamine modification.

This sequence belongs to the prokaryotic/mitochondrial release factor family. Methylated by PrmC. Methylation increases the termination efficiency of RF2.

Its subcellular location is the cytoplasm. In terms of biological role, peptide chain release factor 2 directs the termination of translation in response to the peptide chain termination codons UGA and UAA. This is Peptide chain release factor 2 from Staphylococcus aureus (strain bovine RF122 / ET3-1).